A 138-amino-acid polypeptide reads, in one-letter code: Putative pre-16S rRNA nuclease (138 aa).

The protein belongs to the YqgF nuclease family.

The protein resides in the cytoplasm. Its function is as follows. Could be a nuclease involved in processing of the 5'-end of pre-16S rRNA. This Karelsulcia muelleri (strain GWSS) (Sulcia muelleri) protein is Putative pre-16S rRNA nuclease.